The following is a 331-amino-acid chain: Glyceraldehyde-3-phosphate dehydrogenase (331 aa).

Residues 11–12 (RI), Asp33, and Arg78 contribute to the NAD(+) site. D-glyceraldehyde 3-phosphate is bound by residues 148-150 (SCT), Thr179, 208-209 (TG), and Arg231. The active-site Nucleophile is the Cys149. An NAD(+)-binding site is contributed by Asn313.

It belongs to the glyceraldehyde-3-phosphate dehydrogenase family. In terms of assembly, homotetramer.

Its subcellular location is the cytoplasm. It catalyses the reaction D-glyceraldehyde 3-phosphate + phosphate + NAD(+) = (2R)-3-phospho-glyceroyl phosphate + NADH + H(+). It participates in carbohydrate degradation; glycolysis; pyruvate from D-glyceraldehyde 3-phosphate: step 1/5. The chain is Glyceraldehyde-3-phosphate dehydrogenase (GPD) from Eremothecium gossypii (strain ATCC 10895 / CBS 109.51 / FGSC 9923 / NRRL Y-1056) (Yeast).